A 177-amino-acid polypeptide reads, in one-letter code: Large ribosomal subunit protein uL6 (177 aa).

Belongs to the universal ribosomal protein uL6 family. Part of the 50S ribosomal subunit.

In terms of biological role, this protein binds to the 23S rRNA, and is important in its secondary structure. It is located near the subunit interface in the base of the L7/L12 stalk, and near the tRNA binding site of the peptidyltransferase center. This is Large ribosomal subunit protein uL6 from Xanthobacter autotrophicus (strain ATCC BAA-1158 / Py2).